A 173-amino-acid polypeptide reads, in one-letter code: Enhancer of split mdelta protein (173 aa).

The bHLH domain maps to 15–72 (YRKVTKPLLERKRRARMNLYLDELKDLIVDTMDAQGEQVSKLEKADILELTVNYLKAQ). One can recognise an Orange domain in the interval 93 to 126 (FRAGYTQAAYEVSHIFSTVPGLDLKFGTHLMKQL). The tract at residues 147 to 173 (VNLADQKRSKSPREEDIHHGEEVWRPW) is disordered. Over residues 151–173 (DQKRSKSPREEDIHHGEEVWRPW) the composition is skewed to basic and acidic residues. The short motif at 170 to 173 (WRPW) is the WRPW motif element.

As to quaternary structure, transcription repression requires formation of a complex with a corepressor protein (Groucho).

The protein localises to the nucleus. Functionally, transcriptional repressor of genes that require a bHLH protein for their transcription. May serve as a transcriptional regulator of the Achaete-scute complex (AS-C) genes. Contributes to the neural-epidermal lineage decision during early neurogenesis. As part of the Notch signaling pathway, required to maintain the self-renewal and identity of type II neuroblasts by regulating the expression of the transcriptional repressor erm. The chain is Enhancer of split mdelta protein from Drosophila melanogaster (Fruit fly).